A 247-amino-acid polypeptide reads, in one-letter code: Probable transcriptional regulatory protein Syncc9605_2132 (247 aa).

The protein belongs to the TACO1 family.

The protein resides in the cytoplasm. The protein is Probable transcriptional regulatory protein Syncc9605_2132 of Synechococcus sp. (strain CC9605).